The sequence spans 567 residues: Geranylgeranyl transferase type-2 subunit alpha (567 aa).

6 PFTA repeats span residues Leu44–Thr78, Leu88–Glu122, Asn124–Val158, Pro159–Pro193, Val207–Pro241, and Val363–Pro397. Residue Ser98 is modified to Phosphoserine. LRR repeat units follow at residues Glu442–Leu463, Leu464–Arg486, Cys487–Pro508, Arg509–Ala530, and Arg534–Leu555.

This sequence belongs to the protein prenyltransferase subunit alpha family. In terms of assembly, heterotrimer composed of RABGGTA, RABGGTB and CHM; within this trimer, RABGGTA and RABGGTB form the catalytic component B, while CHM (component A) mediates peptide substrate binding. The Rab GGTase dimer (RGGT) interacts with CHM (component A) prior to Rab protein binding; the association is stabilized by geranylgeranyl pyrophosphate (GGpp). The CHM:RGGT:Rab complex is destabilized by GGpp. Interacts with non-phosphorylated form of RAB8A; phosphorylation of RAB8A at 'Thr-72' disrupts this interaction.

It carries out the reaction geranylgeranyl diphosphate + L-cysteinyl-[protein] = S-geranylgeranyl-L-cysteinyl-[protein] + diphosphate. With respect to regulation, the enzymatic reaction requires the aid of a Rab escort protein (also called component A), such as CHM. Catalyzes the transfer of a geranylgeranyl moiety from geranylgeranyl diphosphate to both cysteines of Rab proteins with the C-terminal sequence -XXCC, -XCXC and -CCXX, such as RAB1A, RAB3A, RAB5A and RAB7A. This is Geranylgeranyl transferase type-2 subunit alpha (RABGGTA) from Homo sapiens (Human).